We begin with the raw amino-acid sequence, 1785 residues long: Brefeldin A-inhibited guanine nucleotide-exchange protein 2 (1785 aa).

Methionine 1 carries the post-translational modification N-acetylmethionine. The tract at residues 2 to 224 (QESQTKSMFV…KPQSPVIQAA (223 aa)) is DCB; DCB:DCB domain and DCB:HUS domain interaction. Phosphoserine is present on residues serine 214, serine 218, and serine 227. The segment at 232 to 285 (RLKHSQAQSKPTTPEKTDLTNGEHARSDSGKVSTENGDAPRERGSSLSGTDDGA) is disordered. Phosphothreonine is present on threonine 244. The segment covering 244–260 (TPEKTDLTNGEHARSDS) has biased composition (basic and acidic residues). Phosphoserine is present on residues serine 277, serine 348, and serine 349. The interval 508–528 (ADAQCVVDIYVNYDCDLNAAN) is HUS; DCB:HUS domain interaction. Serine 614 carries the phosphoserine modification. Position 616 is a phosphothreonine (threonine 616). Serine 617 carries the post-translational modification Phosphoserine. Threonine 626 is modified (phosphothreonine). The SEC7 domain maps to 654–785 (FNKKPKRGIQ…IIMLTTDLHS (132 aa)). Phosphoserine occurs at positions 700, 1511, 1513, 1514, 1525, 1528, 1534, and 1782. Positions 1514-1532 (SIDKNPSERGQSQLSNPTD) are enriched in polar residues. Residues 1514–1535 (SIDKNPSERGQSQLSNPTDDSW) form a disordered region.

As to quaternary structure, homodimer. Interacts with ARFGEF1/BIG1; both proteins are probably part of the same or very similar macromolecular complexes. Interacts with PRKAR1A, PRKAR2A, PRKAR1B, PRKAR2B, PPP1CC, PDE3A, TNFRSF1A, MYCBP and EXOC7. Interacts with GABRB1, GABRB2 and GABRB3. Post-translationally, in vitro phosphorylated by PKA reducing its GEF activity and dephosphorylated by phosphatase PP1. In terms of tissue distribution, expressed in placenta, lung, heart, brain, kidney and pancreas.

It localises to the cytoplasm. Its subcellular location is the membrane. The protein resides in the golgi apparatus. It is found in the perinuclear region. The protein localises to the trans-Golgi network. It localises to the endosome. Its subcellular location is the cytoskeleton. The protein resides in the microtubule organizing center. It is found in the centrosome. The protein localises to the cell projection. It localises to the dendrite. Its subcellular location is the cytoplasmic vesicle. The protein resides in the synapse. With respect to regulation, inhibited by brefeldin A. Promotes guanine-nucleotide exchange on ARF1 and ARF3 and to a lower extent on ARF5 and ARF6. Promotes the activation of ARF1/ARF5/ARF6 through replacement of GDP with GTP. Involved in the regulation of Golgi vesicular transport. Required for the integrity of the endosomal compartment. Involved in trafficking from the trans-Golgi network (TGN) to endosomes and is required for membrane association of the AP-1 complex and GGA1. Seems to be involved in recycling of the transferrin receptor from recycling endosomes to the plasma membrane. Probably is involved in the exit of GABA(A) receptors from the endoplasmic reticulum. Involved in constitutive release of tumor necrosis factor receptor 1 via exosome-like vesicles; the function seems to involve PKA and specifically PRKAR2B. Proposed to act as A kinase-anchoring protein (AKAP) and may mediate crosstalk between Arf and PKA pathways. The sequence is that of Brefeldin A-inhibited guanine nucleotide-exchange protein 2 (ARFGEF2) from Homo sapiens (Human).